The primary structure comprises 534 residues: NAD(P)H-quinone oxidoreductase chain 4 2 (534 aa).

The next 13 helical transmembrane spans lie at F6–L26, W38–S58, L93–F113, F117–D137, L138–I158, F171–F191, I210–I230, T245–F265, F279–F299, I313–G333, M335–T355, M377–A399, and V419–M439.

It belongs to the complex I subunit 4 family.

It is found in the cellular thylakoid membrane. It carries out the reaction a plastoquinone + NADH + (n+1) H(+)(in) = a plastoquinol + NAD(+) + n H(+)(out). The catalysed reaction is a plastoquinone + NADPH + (n+1) H(+)(in) = a plastoquinol + NADP(+) + n H(+)(out). Its function is as follows. NDH-1 shuttles electrons from NAD(P)H, via FMN and iron-sulfur (Fe-S) centers, to quinones in the respiratory chain. The immediate electron acceptor for the enzyme in this species is believed to be plastoquinone. Couples the redox reaction to proton translocation (for every two electrons transferred, four hydrogen ions are translocated across the cytoplasmic membrane), and thus conserves the redox energy in a proton gradient. The protein is NAD(P)H-quinone oxidoreductase chain 4 2 of Synechococcus elongatus (strain ATCC 33912 / PCC 7942 / FACHB-805) (Anacystis nidulans R2).